The primary structure comprises 267 residues: Ribosomal RNA small subunit methyltransferase A (267 aa).

Residues Asn18, Leu20, Gly45, Glu66, Asp91, and Asn112 each coordinate S-adenosyl-L-methionine.

This sequence belongs to the class I-like SAM-binding methyltransferase superfamily. rRNA adenine N(6)-methyltransferase family. RsmA subfamily.

The protein resides in the cytoplasm. It catalyses the reaction adenosine(1518)/adenosine(1519) in 16S rRNA + 4 S-adenosyl-L-methionine = N(6)-dimethyladenosine(1518)/N(6)-dimethyladenosine(1519) in 16S rRNA + 4 S-adenosyl-L-homocysteine + 4 H(+). Functionally, specifically dimethylates two adjacent adenosines (A1518 and A1519) in the loop of a conserved hairpin near the 3'-end of 16S rRNA in the 30S particle. May play a critical role in biogenesis of 30S subunits. This Shewanella amazonensis (strain ATCC BAA-1098 / SB2B) protein is Ribosomal RNA small subunit methyltransferase A.